The primary structure comprises 520 residues: MSTTAYPDTILIIDFGSQVTQLIARRVREANVYCEIVPFQSADEAFKRLQPKGVILSGSPHSTTDIGSPRAPQAIFDAGIPVLGICYGEQTMCAQLGGNVESGHDREFGRAFLDVQEDSPLFAGIWAKGTRHQVWMSHGDRVTSLPDGFTIIGTSPNAPYAVIADEKRKYYGVQFHPEVVHTPDGAKLLQNFVHRIVGVKPGWTMGAYREQAVEAIRKQVGSGKVICALSGGVDSSVAALLAHEAVGDQLTCILVDHGLMRKDEAQQVVEMFREHYNLPLILVDASDRFIGALESESDPEKKRKTIGRLFIEVFEEEARKLGGADFLVQGTLYPDVIESVSFTGGPSVTIKSHHNVGGLPERMKMQLVEPLRELFKDEVRLLGKELGLPDSFIGRHPFPGPGLAIRCPGGVTREKLEILREADAIYLDEIRKAGLYDAIWQAFAVLLPVQTVGVMGDGRTYEFVCALRAVTSVDGMTADFYHYDMNFLGNAATRIINEVRGINRVVYDVTSKPPGTIEWE.

Positions 9–202 constitute a Glutamine amidotransferase type-1 domain; sequence TILIIDFGSQ…VHRIVGVKPG (194 aa). Cys-86 functions as the Nucleophile in the catalytic mechanism. Residues His-176 and Glu-178 contribute to the active site. The 193-residue stretch at 203–395 folds into the GMPS ATP-PPase domain; sequence WTMGAYREQA…LGLPDSFIGR (193 aa). 230–236 is a binding site for ATP; sequence SGGVDSS.

Homodimer.

It carries out the reaction XMP + L-glutamine + ATP + H2O = GMP + L-glutamate + AMP + diphosphate + 2 H(+). Its pathway is purine metabolism; GMP biosynthesis; GMP from XMP (L-Gln route): step 1/1. In terms of biological role, catalyzes the synthesis of GMP from XMP. In Brucella ovis (strain ATCC 25840 / 63/290 / NCTC 10512), this protein is GMP synthase [glutamine-hydrolyzing].